The primary structure comprises 341 residues: MGRILRGLAGGGDLRVVAAETTDIVEEARRRHGLSPTATAALGRAMTGALLLAQLLLKTPKERITLRVEGTGPLGGLVVEADAFGHVRGYVKNPRAEVPLREDGKLNVGELVGAGALRVDRSLPSGEVYTSTVPLVSGEIAEDLAHYLWQSEQIPSAVLLGVRVKGEGEVEVAGGVAVQVMPGAKEEVLGRLEANLKDLPGLTPLLRERGLEGALEALLAGLGFERTDLRALGYFQNEIPARFRCRCNREKALEALVFFTPEEREEMIVKEGGAEVVCHWCGEVYRFSPEEVRSLVAEVRCPDCGALWLYPKGDGTLARIEGETCRCGRKVELPSETRPQA.

Intrachain disulfides connect Cys245–Cys247 and Cys278–Cys281.

Belongs to the HSP33 family. Post-translationally, under oxidizing conditions two disulfide bonds are formed involving the reactive cysteines. Under reducing conditions zinc is bound to the reactive cysteines and the protein is inactive.

It localises to the cytoplasm. Its function is as follows. Redox regulated molecular chaperone. Protects both thermally unfolding and oxidatively damaged proteins from irreversible aggregation. Plays an important role in the bacterial defense system toward oxidative stress. The chain is 33 kDa chaperonin from Thermus thermophilus (strain ATCC BAA-163 / DSM 7039 / HB27).